The chain runs to 422 residues: Keratin, type I cytoskeletal 23 (422 aa).

The span at 1–24 (MNSSHSFNQTYSASVHSLGSTRGR) shows a compositional bias: polar residues. Residues 1 to 35 (MNSSHSFNQTYSASVHSLGSTRGRQGSCHRAPSVH) are disordered. Residues 1-71 (MNSSHSFNQT…GRSSPLLGGN (71 aa)) are head. The coil 1A stretch occupies residues 72–107 (GKATMQNLNDRLATYLEKVRALEEANSKLETRILRW). Residues 72–382 (GKATMQNLND…RLLEGDTEGT (311 aa)) enclose the IF rod domain. A linker 1 region spans residues 108–125 (HQEREPSHRKDYSQYEEN). The coil 1B stretch occupies residues 126-217 (ISRLQEQIVD…KRHEQEMEEN (92 aa)). Residues 218 to 240 (HLPSDFKVSVKVDTTPGEDLIKV) form a linker 12 region. Residues 241–378 (LEDMRQEYEL…ATYRRLLEGD (138 aa)) form a coil 2 region. The segment at 379–422 (TEGTMDGSESRLKGSEASTIKAITQESVNGRIVLSQVNEIQKHI) is rod-like helical tail.

The protein belongs to the intermediate filament family. Heterotetramer of two type I and two type II keratins.

The sequence is that of Keratin, type I cytoskeletal 23 (Krt23) from Mus musculus (Mouse).